Reading from the N-terminus, the 364-residue chain is tRNA-specific 2-thiouridylase MnmA 1 (364 aa).

ATP is bound by residues 11–18 (GMSGGTDS) and F37. C96 functions as the Nucleophile in the catalytic mechanism. An intrachain disulfide couples C96 to C193. G120 lines the ATP pocket. An interaction with tRNA region spans residues 142 to 144 (KDQ). The active-site Cysteine persulfide intermediate is the C193. The interval 309 to 310 (RY) is interaction with tRNA.

The protein belongs to the MnmA/TRMU family.

The protein resides in the cytoplasm. The catalysed reaction is S-sulfanyl-L-cysteinyl-[protein] + uridine(34) in tRNA + AH2 + ATP = 2-thiouridine(34) in tRNA + L-cysteinyl-[protein] + A + AMP + diphosphate + H(+). Its function is as follows. Catalyzes the 2-thiolation of uridine at the wobble position (U34) of tRNA, leading to the formation of s(2)U34. The sequence is that of tRNA-specific 2-thiouridylase MnmA 1 from Bacteroides fragilis (strain YCH46).